Here is a 287-residue protein sequence, read N- to C-terminus: Stomatin-like protein 3 (287 aa).

Phosphoserine is present on S3. Residues 25-45 (WILFFLSFLLMLVTFPISVWM) form a helical; Signal-anchor for type III membrane protein membrane-spanning segment. The Cytoplasmic segment spans residues 46–287 (CLKIIKEYER…GNNKKVTAKA (242 aa)). S237 bears the Phosphoserine mark.

This sequence belongs to the band 7/mec-2 family. Homodimer. Interacts with PIEZO1 and PIEZO2. Expressed by all dorsal root ganglion neurons and is selectively expressed in neuronal tissues. Detected in olfactory epithelium.

It is found in the cell membrane. Required for the function of many mechanoreceptors. Modulate mechanotransduction channels and acid-sensing ion channels (ASIC) proteins. Potentiates PIEZO1 and PIEZO2 function by increasing their sensitivity to mechanical stimulations. This chain is Stomatin-like protein 3 (Stoml3), found in Mus musculus (Mouse).